The following is a 436-amino-acid chain: MGKRLDQPQMYPQYTYYYPHYLQTKSYAPAPHPMAPPSPSTNSSSNNSSNNSSGEQLSKTNLYIRGLPPGTTDQDLIKLCQPYGKIVSTKAILDKNTNQCKGYGFVDFDSPAAAQKAVASLKANGVQAQMAKQQEQDPTNLYISNLPISMDEQELENMLKPFGHVISTRILRDANGVSRGVGFARMESTEKCEVVIQHFNGKYLKTPPGIPAPSEPLLCKFADGGQKKRQNQSKYTQNGRPWPREGEAGMALTYDPTAAIQNGFYSSPYSIATNRMIPQTSITPFIAASPVSTYQVQSTSWMPHPPYVMQPTGAVITPTMDHPMSMQPANMMGPLTQQMNHLSLGTTGTIQSQDRIMILHQLLCQYMTAAAPMQGTYIPQYTPVPPTAVSIEGVVADTSPQTVAPSSQDTSGQQQQIAVDTSNEHAPAYSYQQSKP.

A disordered region spans residues 28–56 (APAPHPMAPPSPSTNSSSNNSSNNSSGEQ). The segment covering 30-39 (APHPMAPPSP) has biased composition (pro residues). The segment covering 40-53 (STNSSSNNSSNNSS) has biased composition (low complexity). RRM domains follow at residues 60–133 (TNLY…MAKQ) and 139–224 (TNLY…FADG). The segment covering 398-421 (TSPQTVAPSSQDTSGQQQQIAVDT) has biased composition (polar residues). The interval 398-436 (TSPQTVAPSSQDTSGQQQQIAVDTSNEHAPAYSYQQSKP) is disordered.

It is found in the cytoplasm. In terms of biological role, binds poly(A) and poly(U) oligoribonucleotides. This Pongo abelii (Sumatran orangutan) protein is RNA-binding motif, single-stranded-interacting protein 3 (RBMS3).